The following is a 212-amino-acid chain: HTH-type transcriptional repressor NicS (212 aa).

The HTH tetR-type domain maps to 14–74 (DRTRDNILKA…SVLEHIYASF (61 aa)). The segment at residues 37 to 56 (RIEQISTLAKSNDRMIYYYF) is a DNA-binding region (H-T-H motif).

It functions in the pathway cofactor degradation; nicotinate degradation [regulation]. In terms of biological role, transcriptional repressor for the nicAB operon, encoding the upper aerobic nicotinate degradation pathway. Acts under non-induced conditions: repression of the nicAB operon becomes alleviated in presence of either nicotinate or 6-hydroxynicotinate (6HNA). This chain is HTH-type transcriptional repressor NicS (nicS), found in Pseudomonas putida (strain ATCC 47054 / DSM 6125 / CFBP 8728 / NCIMB 11950 / KT2440).